A 78-amino-acid chain; its full sequence is Putative defensin-like protein 202 (78 aa).

The first 29 residues, 1-29 (MAKTQNFVCFTAVLLILILVSTEIPMIEG), serve as a signal peptide directing secretion. 3 disulfide bridges follow: Cys44–Cys65, Cys49–Cys74, and Cys53–Cys76.

Belongs to the DEFL family.

The protein resides in the secreted. The protein is Putative defensin-like protein 202 of Arabidopsis thaliana (Mouse-ear cress).